A 436-amino-acid polypeptide reads, in one-letter code: Adenylyltransferase and sulfurtransferase UBA4 (436 aa).

ATP contacts are provided by residues G74, D95, 102–106 (SNLHR), K119, and 163–164 (DT). Zn(2+)-binding residues include C205 and C208. The Glycyl thioester intermediate; for adenylyltransferase activity role is filled by C222. Residues C283 and C286 each contribute to the Zn(2+) site. The 100-residue stretch at 335–434 (NEKDHILIDV…YIDEEDHSYP (100 aa)) folds into the Rhodanese domain. C393 serves as the catalytic Cysteine persulfide intermediate; for sulfurtransferase activity.

It in the N-terminal section; belongs to the HesA/MoeB/ThiF family. UBA4 subfamily. Zn(2+) is required as a cofactor.

It is found in the cytoplasm. The protein resides in the cytosol. It functions in the pathway tRNA modification; 5-methoxycarbonylmethyl-2-thiouridine-tRNA biosynthesis. Functionally, plays a central role in 2-thiolation of mcm(5)S(2)U at tRNA wobble positions of cytosolic tRNA(Lys), tRNA(Glu) and tRNA(Gln). Acts by mediating the C-terminal thiocarboxylation of sulfur carrier URM1. Its N-terminus first activates URM1 as acyl-adenylate (-COAMP), then the persulfide sulfur on the catalytic cysteine is transferred to URM1 to form thiocarboxylation (-COSH) of its C-terminus. The reaction probably involves hydrogen sulfide that is generated from the persulfide intermediate and that acts as a nucleophile towards URM1. Subsequently, a transient disulfide bond is formed. Does not use thiosulfate as sulfur donor; NFS1 probably acting as a sulfur donor for thiocarboxylation reactions. Prior mcm(5) tRNA modification by the elongator complex is required for 2-thiolation. May also be involved in protein urmylation. In Vanderwaltozyma polyspora (strain ATCC 22028 / DSM 70294 / BCRC 21397 / CBS 2163 / NBRC 10782 / NRRL Y-8283 / UCD 57-17) (Kluyveromyces polysporus), this protein is Adenylyltransferase and sulfurtransferase UBA4.